A 349-amino-acid chain; its full sequence is MVRPKQSIQSHRKDEHVFLAEKFHQDDRQNDFDGLRFIHQSLPELAIADVDISTQFAGTTWQSPFYINGMTGGSQQTKKLNAQLAQVAQIAGLPMATGSQSVAIKDPTLVDTFSVIREFNPAGFILANIGAGNDLSVAQKAVAMTQANALEIHVNTAQEVVMPEGDREFYWLDQIGEIVANLDVPVIVKEVGFGMSAETIAKLQSVGVTNIDVSGKGGTNFVTIENERRRDKAYDYLSDWGQSTVESLFESQAFQTELTILASGGIRNPLDIVKALRLGASAVGISGQILHMLIKTGPTETAEQLLAWQAQIQSIMAILGARNLTALQSAPMILSPNLRHYLNERHLSL.

Substrate is bound at residue 12-13; the sequence is RK. Residues 69–71, Ser99, and Asn128 contribute to the FMN site; that span reads GMT. Substrate is bound at residue Gln158. Glu159 contacts Mg(2+). FMN contacts are provided by residues Lys189, Ser214, Thr219, 265–267, and 286–287; these read GIR and SG.

This sequence belongs to the IPP isomerase type 2 family. As to quaternary structure, homooctamer. Dimer of tetramers. FMN serves as cofactor. NADPH is required as a cofactor. It depends on Mg(2+) as a cofactor.

Its subcellular location is the cytoplasm. It carries out the reaction isopentenyl diphosphate = dimethylallyl diphosphate. In terms of biological role, involved in the biosynthesis of isoprenoids. Catalyzes the 1,3-allylic rearrangement of the homoallylic substrate isopentenyl (IPP) to its allylic isomer, dimethylallyl diphosphate (DMAPP). The chain is Isopentenyl-diphosphate delta-isomerase from Latilactobacillus sakei subsp. sakei (strain 23K) (Lactobacillus sakei subsp. sakei).